Consider the following 127-residue polypeptide: Aspartate 1-decarboxylase (127 aa).

The active-site Schiff-base intermediate with substrate; via pyruvic acid is the Ser-25. Pyruvic acid (Ser) is present on Ser-25. Thr-57 contacts substrate. Tyr-58 functions as the Proton donor in the catalytic mechanism. A substrate-binding site is contributed by 73 to 75 (GAA).

Belongs to the PanD family. Heterooctamer of four alpha and four beta subunits. Pyruvate serves as cofactor. Post-translationally, is synthesized initially as an inactive proenzyme, which is activated by self-cleavage at a specific serine bond to produce a beta-subunit with a hydroxyl group at its C-terminus and an alpha-subunit with a pyruvoyl group at its N-terminus.

It is found in the cytoplasm. It carries out the reaction L-aspartate + H(+) = beta-alanine + CO2. It functions in the pathway cofactor biosynthesis; (R)-pantothenate biosynthesis; beta-alanine from L-aspartate: step 1/1. Its function is as follows. Catalyzes the pyruvoyl-dependent decarboxylation of aspartate to produce beta-alanine. This Clostridium botulinum (strain ATCC 19397 / Type A) protein is Aspartate 1-decarboxylase.